The chain runs to 164 residues: MAWLVLRRLGPVLAPRCPRLSLRPQVPAVRRLGTGSLLLSARKFTDKHEWISVENGIGTVGISNFAQEALGDVVYCSLPEIGTKLNKDDEFGALESVKAASELYSPLTGEVTDINAALADNPGLVNKSCYQDGWLIKMTVEKPAELDELMSEDAYEKYIKSIED.

A mitochondrion-targeting transit peptide spans 1-39; that stretch reads MAWLVLRRLGPVLAPRCPRLSLRPQVPAVRRLGTGSLLL. The Lipoyl-binding domain maps to 57–139; it reads IGTVGISNFA…YQDGWLIKMT (83 aa). Lys-98 carries the N6-lipoyllysine modification.

Belongs to the GcvH family. As to quaternary structure, the glycine cleavage system is composed of four proteins: P (GLDC), T (GCST), L (DLD) and H (GCSH). Interacts with GLDC. It depends on (R)-lipoate as a cofactor.

It localises to the mitochondrion. The glycine cleavage system catalyzes the degradation of glycine. The H protein (GCSH) shuttles the methylamine group of glycine from the P protein (GLDC) to the T protein (GCST). Has a pivotal role in the lipoylation of enzymes involved in cellular energetics such as the mitochondrial dihydrolipoyllysine-residue acetyltransferase component of pyruvate dehydrogenase complex (DLAT), and the mitochondrial dihydrolipoyllysine-residue succinyltransferase component of 2-oxoglutarate dehydrogenase complex (DLST). The protein is Glycine cleavage system H protein, mitochondrial of Gallus gallus (Chicken).